Reading from the N-terminus, the 249-residue chain is Exosome complex component Rrp4 (249 aa).

Positions Asn-73 to Lys-144 constitute an S1 motif domain. The KH domain maps to Gly-154–Ile-211.

This sequence belongs to the RRP4 family. Component of the archaeal exosome complex. Forms a trimer of Rrp4 and/or Csl4 subunits. The trimer associates with a hexameric ring-like arrangement composed of 3 Rrp41-Rrp42 heterodimers.

The protein localises to the cytoplasm. Its function is as follows. Non-catalytic component of the exosome, which is a complex involved in RNA degradation. Increases the RNA binding and the efficiency of RNA degradation. Confers strong poly(A) specificity to the exosome. The sequence is that of Exosome complex component Rrp4 from Saccharolobus solfataricus (strain ATCC 35092 / DSM 1617 / JCM 11322 / P2) (Sulfolobus solfataricus).